The chain runs to 150 residues: UPF0756 membrane protein HAPS_1649 (150 aa).

Helical transmembrane passes span 1-21 (MSLQ…LGIF), 27-46 (VTIS…SKYV), 52-72 (YGIK…LVSG), 82-102 (LINW…WLGG), and 123-143 (IIGV…AGIL).

Belongs to the UPF0756 family.

Its subcellular location is the cell membrane. The protein is UPF0756 membrane protein HAPS_1649 of Glaesserella parasuis serovar 5 (strain SH0165) (Haemophilus parasuis).